We begin with the raw amino-acid sequence, 405 residues long: Cystathionine gamma-lyase (405 aa).

Residues R62, Y114, and R119 each coordinate substrate. K212 carries the post-translational modification N6-(pyridoxal phosphate)lysine. E339 provides a ligand contact to substrate.

It belongs to the trans-sulfuration enzymes family. Homotetramer. Interacts with CALM in a calcium-dependent manner. It depends on pyridoxal 5'-phosphate as a cofactor.

The protein localises to the cytoplasm. The catalysed reaction is L,L-cystathionine + H2O = 2-oxobutanoate + L-cysteine + NH4(+). It catalyses the reaction L-cysteine + H2O = hydrogen sulfide + pyruvate + NH4(+) + H(+). The enzyme catalyses L-homocysteine + H2O = 2-oxobutanoate + hydrogen sulfide + NH4(+) + H(+). It carries out the reaction L-homoserine = 2-oxobutanoate + NH4(+). The catalysed reaction is L-selenocystathionine + H2O = L-selenocysteine + 2-oxobutanoate + NH4(+). The protein operates within amino-acid biosynthesis; L-cysteine biosynthesis; L-cysteine from L-homocysteine and L-serine: step 2/2. In terms of biological role, catalyzes the last step in the trans-sulfuration pathway from L-methionine to L-cysteine in a pyridoxal-5'-phosphate (PLP)-dependent manner, which consists on cleaving the L,L-cystathionine molecule into L-cysteine, ammonia and 2-oxobutanoate. Part of the L-cysteine derived from the trans-sulfuration pathway is utilized for biosynthesis of the ubiquitous antioxidant glutathione. Besides its role in the conversion of L-cystathionine into L-cysteine, it utilizes L-cysteine and L-homocysteine as substrates (at much lower rates than L,L-cystathionine) to produce hydrogen sulfide (H2S). In vitro, it converts two L-cysteine molecules into lanthionine and H2S, and two L-homocysteine molecules to homolanthionine and H2S, which can be particularly relevant under conditions of severe hyperhomocysteinemia. Lanthionine and homolanthionine are structural homologs of L,L-cystathionine that differ by the absence or presence of an extra methylene group, respectively. Acts as a cysteine-protein sulfhydrase by mediating sulfhydration of target proteins: sulfhydration consists of converting -SH groups into -SSH on specific cysteine residues of target proteins such as GAPDH, PTPN1 and NF-kappa-B subunit RELA, thereby regulating their function. By generating the gasotransmitter H2S, it participates in a number of physiological processes such as vasodilation, bone protection, and inflammation. Plays an essential role in myogenesis by contributing to the biogenesis of H2S in skeletal muscle tissue. Can also accept homoserine as substrate. Catalyzes the elimination of selenocystathionine (which can be derived from the diet) to yield selenocysteine, ammonia and 2-oxobutanoate. The chain is Cystathionine gamma-lyase (CTH) from Macaca fascicularis (Crab-eating macaque).